Here is a 340-residue protein sequence, read N- to C-terminus: HTH-type transcriptional regulator PtxS (340 aa).

Residues 12–67 (VTISEVAQAAGVSKATVSRYIGGDRQLLADATAQRIEAVIEQLGYRPNRMASALKR) enclose the HTH lacI-type domain. The H-T-H motif DNA-binding region spans 14 to 33 (ISEVAQAAGVSKATVSRYIG).

In terms of assembly, homodimer.

Its activity is regulated as follows. 2-ketogluconate acts as a molecular effector and causes dissociation of PtxS from its target promoter. Glucose negatively affects the molecular binding of PtxS and 2KGA, and gluconic acid inhibits the PtxS-2KGA binding reaction. Involved in the regulation of 2-ketogluconic acid metabolism via the control of the expression of the kgu operon. Binds directly to a 14-bp palindrome sequence via its conserved HTH motif. The chain is HTH-type transcriptional regulator PtxS from Pseudomonas plecoglossicida.